Here is a 202-residue protein sequence, read N- to C-terminus: Small ribosomal subunit protein uS4c (202 aa).

The S4 RNA-binding domain maps to 90-153 (MRLDNIIFRL…KSETIISKNI (64 aa)).

This sequence belongs to the universal ribosomal protein uS4 family. Part of the 30S ribosomal subunit. Contacts protein S5. The interaction surface between S4 and S5 is involved in control of translational fidelity.

It is found in the plastid. Its subcellular location is the chloroplast. In terms of biological role, one of the primary rRNA binding proteins, it binds directly to 16S rRNA where it nucleates assembly of the body of the 30S subunit. With S5 and S12 plays an important role in translational accuracy. This is Small ribosomal subunit protein uS4c (rps4) from Catharomnion ciliatum (Moss).